An 831-amino-acid polypeptide reads, in one-letter code: Phenylalanine--tRNA ligase beta subunit (831 aa).

One can recognise a tRNA-binding domain in the interval glycine 44–alanine 155. Residues tryptophan 414–serine 489 form the B5 domain. The Mg(2+) site is built by aspartate 467, aspartate 473, glutamate 476, and glutamate 477. The 94-residue stretch at serine 737–arginine 830 folds into the FDX-ACB domain.

The protein belongs to the phenylalanyl-tRNA synthetase beta subunit family. Type 1 subfamily. As to quaternary structure, tetramer of two alpha and two beta subunits. The cofactor is Mg(2+).

It localises to the cytoplasm. The catalysed reaction is tRNA(Phe) + L-phenylalanine + ATP = L-phenylalanyl-tRNA(Phe) + AMP + diphosphate + H(+). The chain is Phenylalanine--tRNA ligase beta subunit from Mycobacterium bovis (strain ATCC BAA-935 / AF2122/97).